A 444-amino-acid polypeptide reads, in one-letter code: Dihydroorotate dehydrogenase (quinone), mitochondrial (444 aa).

The chain crosses the membrane as a helical span at residues 34-56 (GGASRYIIGTASVLVGAMAGFYI). Residues 124–128 (AGLDK) and Thr-148 each bind FMN. Position 128 (Lys-128) interacts with substrate. 173-177 (NRYGF) is a substrate binding site. FMN contacts are provided by Asn-220 and Asn-250. Residue 250–255 (NVSSPN) coordinates substrate. The active-site Nucleophile is the Ser-253. 2 residues coordinate FMN: Lys-301 and Ser-329. 330–331 (NT) is a substrate binding site. FMN is bound by residues Gly-355, Gly-385, and 406-407 (YT).

Belongs to the dihydroorotate dehydrogenase family. Type 2 subfamily. It depends on FMN as a cofactor.

The protein localises to the mitochondrion inner membrane. The catalysed reaction is (S)-dihydroorotate + a quinone = orotate + a quinol. It participates in pyrimidine metabolism; UMP biosynthesis via de novo pathway; orotate from (S)-dihydroorotate (quinone route): step 1/1. In terms of biological role, catalyzes the conversion of dihydroorotate to orotate with quinone as electron acceptor. In Eremothecium gossypii (strain ATCC 10895 / CBS 109.51 / FGSC 9923 / NRRL Y-1056) (Yeast), this protein is Dihydroorotate dehydrogenase (quinone), mitochondrial (URA9).